We begin with the raw amino-acid sequence, 246 residues long: Complement C1q tumor necrosis factor-related protein 3 (246 aa).

Positions methionine 1–cysteine 22 are cleaved as a signal peptide. A Collagen-like domain is found at glycine 51–proline 113. The interval glutamine 53–valine 112 is disordered. The segment covering proline 55–isoleucine 64 has biased composition (pro residues). Residues proline 65–asparagine 74 show a composition bias toward low complexity. The segment covering glutamate 80–lysine 107 has biased composition (basic and acidic residues). A C1q domain is found at proline 113–lysine 246.

The protein resides in the secreted. The chain is Complement C1q tumor necrosis factor-related protein 3 (C1qtnf3) from Mus musculus (Mouse).